Consider the following 345-residue polypeptide: Arginine N-succinyltransferase (345 aa).

Succinyl-CoA is bound at residue leucine 125. Histidine 229 acts as the Proton donor in catalysis.

The protein belongs to the arginine N-succinyltransferase family.

The catalysed reaction is succinyl-CoA + L-arginine = N(2)-succinyl-L-arginine + CoA + H(+). It functions in the pathway amino-acid degradation; L-arginine degradation via AST pathway; L-glutamate and succinate from L-arginine: step 1/5. In terms of biological role, catalyzes the transfer of succinyl-CoA to arginine to produce N(2)-succinylarginine. The protein is Arginine N-succinyltransferase of Yersinia enterocolitica serotype O:8 / biotype 1B (strain NCTC 13174 / 8081).